Reading from the N-terminus, the 165-residue chain is UPF0303 protein BceJ2315_15790 (165 aa).

The protein belongs to the UPF0303 family.

In Burkholderia cenocepacia (strain ATCC BAA-245 / DSM 16553 / LMG 16656 / NCTC 13227 / J2315 / CF5610) (Burkholderia cepacia (strain J2315)), this protein is UPF0303 protein BceJ2315_15790.